We begin with the raw amino-acid sequence, 813 residues long: Ankyrin repeat domain-containing protein SOWAHB (813 aa).

Disordered stretches follow at residues 142–256 (SAAP…QSLS) and 400–436 (ETCGSEESDSGEGGDCDTEPRDNDDADDDTFSSDSHK). Basic and acidic residues predominate over residues 158 to 176 (MSEKARVNPSHWDTKRYYP). Residues 177-189 (EDPPVPDSLPVSP) show a composition bias toward pro residues. Over residues 191 to 202 (CTNTRQSSFTST) the composition is skewed to polar residues. Low complexity predominate over residues 208–244 (HSLSSNNLSSSFSSPESPGLVAKPYNASPSPAGSSPN). Polar residues predominate over residues 245-256 (IREQTPKSQSLS). The span at 400–416 (ETCGSEESDSGEGGDCD) shows a compositional bias: acidic residues. ANK repeat units follow at residues 657–686 (TGYTALHWFAKHGCIDLFNKVVIGAKKAGI) and 696–726 (NGYTPLHIAAIHGHHKVAIMLVEKLKVNVKV).

The protein belongs to the SOWAH family.

This Xenopus laevis (African clawed frog) protein is Ankyrin repeat domain-containing protein SOWAHB (sowahb).